Consider the following 354-residue polypeptide: Probable trehalose-phosphate phosphatase E (354 aa).

The protein belongs to the trehalose phosphatase family. Requires a divalent metal cation as cofactor.

It catalyses the reaction alpha,alpha-trehalose 6-phosphate + H2O = alpha,alpha-trehalose + phosphate. Its pathway is glycan biosynthesis; trehalose biosynthesis. Functionally, removes the phosphate from trehalose 6-phosphate to produce free trehalose. Trehalose accumulation in plant may improve abiotic stress tolerance. This Arabidopsis thaliana (Mouse-ear cress) protein is Probable trehalose-phosphate phosphatase E (TPPE).